The chain runs to 196 residues: uncharacterized protein (196 aa).

The 106-residue stretch at 58–163 folds into the Bro-N domain; that stretch reads HKFFDAIKDS…IILPNNYHKN (106 aa).

This is an uncharacterized protein from Acanthamoeba polyphaga mimivirus (APMV).